Here is a 355-residue protein sequence, read N- to C-terminus: uncharacterized protein (355 aa).

An N-terminal signal peptide occupies residues 1–21; it reads MQKKVLFNDIVFVCFPITDNG. 6 N-linked (GlcNAc...) asparagine; by host glycosylation sites follow: N20, N78, N87, N156, N159, and N274. Residues 22–331 are Virion surface-facing; the sequence is SIIISDIGYS…SSTSFFSRYG (310 aa). Residues 288–317 form a disordered region; the sequence is GSKSTPNGPNGPTPTPSNGPNGPTPVPGIP. Over residues 296 to 317 the composition is skewed to pro residues; the sequence is PNGPTPTPSNGPNGPTPVPGIP. N320 carries N-linked (GlcNAc...) asparagine; by host glycosylation. The chain crosses the membrane as a helical span at residues 332-352; it reads LWIIIAIILLIVIISAVGIYF. Over 353-355 the chain is Intravirion; sequence YLR.

It is found in the host membrane. It localises to the virion. This is an uncharacterized protein from Acanthamoeba polyphaga mimivirus (APMV).